We begin with the raw amino-acid sequence, 625 residues long: UvrABC system protein C (625 aa).

A GIY-YIG domain is found at 26–105 (LEPGVYFLRD…IKQHQPHFNT (80 aa)). The region spanning 215–250 (GELLEKLATKMLAASENLDFEQAATIRDQIRGLQAL) is the UVR domain.

Belongs to the UvrC family. Interacts with UvrB in an incision complex.

Its subcellular location is the cytoplasm. Functionally, the UvrABC repair system catalyzes the recognition and processing of DNA lesions. UvrC both incises the 5' and 3' sides of the lesion. The N-terminal half is responsible for the 3' incision and the C-terminal half is responsible for the 5' incision. The polypeptide is UvrABC system protein C (Microcystis aeruginosa (strain NIES-843 / IAM M-2473)).